Consider the following 360-residue polypeptide: Cytochrome b-c1 complex subunit 2, mitochondrial (360 aa).

Residues 1-15 constitute a mitochondrion transit peptide; it reads MLSSRLQFAQQTARK.

The protein belongs to the peptidase M16 family. UQCRC2/QCR2 subfamily. In terms of assembly, component of the ubiquinol-cytochrome c oxidoreductase (cytochrome b-c1 complex, complex III, CIII), a multisubunit enzyme composed of 3 respiratory subunits cytochrome b, cytochrome c1 and Rieske protein, 2 core protein subunits, and additional low-molecular weight protein subunits. The complex exists as an obligatory dimer and forms supercomplexes (SCs) in the inner mitochondrial membrane with cytochrome c oxidase (complex IV, CIV).

It is found in the mitochondrion inner membrane. Its function is as follows. Component of the ubiquinol-cytochrome c oxidoreductase, a multisubunit transmembrane complex that is part of the mitochondrial electron transport chain which drives oxidative phosphorylation. The respiratory chain contains 3 multisubunit complexes succinate dehydrogenase (complex II, CII), ubiquinol-cytochrome c oxidoreductase (cytochrome b-c1 complex, complex III, CIII) and cytochrome c oxidase (complex IV, CIV), that cooperate to transfer electrons derived from NADH and succinate to molecular oxygen, creating an electrochemical gradient over the inner membrane that drives transmembrane transport and the ATP synthase. The cytochrome b-c1 complex catalyzes electron transfer from ubiquinol to cytochrome c, linking this redox reaction to translocation of protons across the mitochondrial inner membrane, with protons being carried across the membrane as hydrogens on the quinol. In the process called Q cycle, 2 protons are consumed from the matrix, 4 protons are released into the intermembrane space and 2 electrons are passed to cytochrome c. The sequence is that of Cytochrome b-c1 complex subunit 2, mitochondrial (QCR2) from Kluyveromyces lactis (strain ATCC 8585 / CBS 2359 / DSM 70799 / NBRC 1267 / NRRL Y-1140 / WM37) (Yeast).